Reading from the N-terminus, the 84-residue chain is Small ribosomal subunit protein uS17 (84 aa).

Belongs to the universal ribosomal protein uS17 family. As to quaternary structure, part of the 30S ribosomal subunit.

Its function is as follows. One of the primary rRNA binding proteins, it binds specifically to the 5'-end of 16S ribosomal RNA. This Porphyromonas gingivalis (strain ATCC 33277 / DSM 20709 / CIP 103683 / JCM 12257 / NCTC 11834 / 2561) protein is Small ribosomal subunit protein uS17.